The sequence spans 183 residues: Putative manganese efflux pump MntP (183 aa).

6 helical membrane passes run 8–28, 39–59, 68–88, 108–128, 133–153, and 162–182; these read MIALSLMALALGMDAFSVALG, IFYIGLTIGLFHIFMPLVGMA, FGSIATYAGGVLLLWLGGQMI, LFFAFSVSLDSFSVGLSLGIF, MATILLFGLFSTVLTWIGLLV, and GSYSEALGGSILLVFGLKLLF.

It belongs to the MntP (TC 9.B.29) family.

It localises to the cell membrane. In terms of biological role, probably functions as a manganese efflux pump. This is Putative manganese efflux pump MntP from Geobacillus thermodenitrificans (strain NG80-2).